The chain runs to 250 residues: MTRETLKTLQSTFGEMVASFVFGFAVYSALLGSALTEQSAARVIVGLTVGFSGICVIYSFCDVTVAHFNPAITLAAILTCKLGVLRGIGYIVAQYIGFILAVCALLPCSPVGYKETLNIIRPTPSPFGGDNLNVFFTEFFLTAILVHVAFATAVNPYKPKTDTEGKFVDPDEEEPVDRRITAPLCIGLTLGFLAFLGLASSGGAFNPGLTLAPVIMSNTWNHFWAYFAGQYLGGFVGGLLQVLVLYKLSF.

Over 1 to 15 (MTRETLKTLQSTFGE) the chain is Cytoplasmic. The helical transmembrane segment at 16–36 (MVASFVFGFAVYSALLGSALT) threads the bilayer. The Extracellular segment spans residues 37 to 42 (EQSAAR). The helical transmembrane segment at 43-63 (VIVGLTVGFSGICVIYSFCDV) threads the bilayer. The Cytoplasmic portion of the chain corresponds to 64–86 (TVAHFNPAITLAAILTCKLGVLR). The NPA signature appears at 69–71 (NPA). A helical membrane pass occupies residues 87 to 107 (GIGYIVAQYIGFILAVCALLP). The Extracellular segment spans residues 108-133 (CSPVGYKETLNIIRPTPSPFGGDNLN). The chain crosses the membrane as a helical span at residues 134-154 (VFFTEFFLTAILVHVAFATAV). Residues 155-179 (NPYKPKTDTEGKFVDPDEEEPVDRR) are Cytoplasmic-facing. The chain crosses the membrane as a helical span at residues 180 to 200 (ITAPLCIGLTLGFLAFLGLAS). At 201–224 (SGGAFNPGLTLAPVIMSNTWNHFW) the chain is on the extracellular side. Positions 206–208 (NPG) match the NPG motif. Residues 225 to 245 (AYFAGQYLGGFVGGLLQVLVL) traverse the membrane as a helical segment. Residues 246–250 (YKLSF) are Cytoplasmic-facing.

This sequence belongs to the MIP/aquaporin (TC 1.A.8) family.

It is found in the cell membrane. In terms of biological role, water channel required to facilitate the transport of water across membranes. Involved in osmotolerance. In Encephalitozoon cuniculi (strain GB-M1) (Microsporidian parasite), this protein is Aquaporin (AQP).